Here is a 130-residue protein sequence, read N- to C-terminus: Large ribosomal subunit protein bL17 (130 aa).

Belongs to the bacterial ribosomal protein bL17 family. As to quaternary structure, part of the 50S ribosomal subunit. Contacts protein L32.

The polypeptide is Large ribosomal subunit protein bL17 (Nitrosomonas europaea (strain ATCC 19718 / CIP 103999 / KCTC 2705 / NBRC 14298)).